The chain runs to 437 residues: Adenylosuccinate synthetase (437 aa).

GTP is bound by residues 25-31, 53-55, and Lys62; these read GDEGKGK and GHT. Residue Asp26 is the Proton acceptor of the active site. The Mg(2+) site is built by Asp26 and Gly53. Residues 26 to 29 and 51 to 54 contribute to the IMP site; these read DEGK and NAGH. The active-site Proton donor is His54. The IMP site is built by Thr141, Arg155, Asn232, and Thr247. Thr307 provides a ligand contact to GTP. Residue 307–313 participates in substrate binding; sequence TTTKRPR. Arg311 provides a ligand contact to IMP. GTP-binding positions include Arg313, 339–341, and 425–427; these read KLD and GIG.

It belongs to the adenylosuccinate synthetase family. Homodimer. Mg(2+) serves as cofactor.

The protein localises to the cytoplasm. It catalyses the reaction IMP + L-aspartate + GTP = N(6)-(1,2-dicarboxyethyl)-AMP + GDP + phosphate + 2 H(+). The protein operates within purine metabolism; AMP biosynthesis via de novo pathway; AMP from IMP: step 1/2. Functionally, plays an important role in the salvage pathway for purine nucleotide biosynthesis. Catalyzes the first committed step in the biosynthesis of AMP from IMP. This Plasmodium vivax (strain Salvador I) protein is Adenylosuccinate synthetase.